We begin with the raw amino-acid sequence, 137 residues long: Putative pre-16S rRNA nuclease (137 aa).

It belongs to the YqgF nuclease family.

It localises to the cytoplasm. Could be a nuclease involved in processing of the 5'-end of pre-16S rRNA. In Bacillus mycoides (strain KBAB4) (Bacillus weihenstephanensis), this protein is Putative pre-16S rRNA nuclease.